The primary structure comprises 2471 residues: Histidine protein kinase 1 (2471 aa).

Residues 1-10 (MSMNFFNSSE) are compositionally biased toward polar residues. 3 disordered regions span residues 1–30 (MSMNFFNSSEPARDHKPDQEKETVMTTEHY), 52–75 (ETKKGPNLHISDLSPLESQSVPPS), and 395–415 (RQGSYSSNESRRKSSSGFNIG). Residues 11 to 30 (PARDHKPDQEKETVMTTEHY) are compositionally biased toward basic and acidic residues. The 279-residue stretch at 358–636 (EHPSQSTDQK…DCHSLLHDLI (279 aa)) folds into the Protein kinase domain. One can recognise a Histidine kinase domain in the interval 2004 to 2225 (NMSHEIRTPF…TFYVSVIMDA (222 aa)). A Phosphohistidine; by autocatalysis modification is found at His2007. The region spanning 2340–2466 (RILLAEDNLL…ELRRILTKVG (127 aa)) is the Response regulatory domain. Asp2394 carries the 4-aspartylphosphate modification.

The phosphorelay mechanism involves the sequential transfer of a phosphate group from His-2007 (H1) in the histidine kinase domain (transmitter domain) to Asp-2394 (D1) of the response regulatory domain (receiver domain). This transfer probably occurs between two CHK1 molecules, rather than intramolecularly.

The catalysed reaction is ATP + protein L-histidine = ADP + protein N-phospho-L-histidine.. Functionally, histidine kinase involved in a two-component signaling pathway that regulates cell wall mannan and glucan biosynthesis. Regulates quorum sensing as well as hyphal formation, biofilm formation, chlamidospore formation, and virulence. Plays a prominent role in phagocyte activation. Involved in the covering of the most potent pro-inflammatory cell wall molecules, the beta-glucans, underneath a dense mannan layer, so that the pathogen becomes partly invisible for immune cells such as phagocytes. The sequence is that of Histidine protein kinase 1 (CHK1) from Candida albicans (strain SC5314 / ATCC MYA-2876) (Yeast).